Here is a 544-residue protein sequence, read N- to C-terminus: Probable protein kinase UbiB (544 aa).

The helical transmembrane segment at 1–21 (MIFGELRRLYLIIGVMLSYGL) threads the bilayer. A Protein kinase domain is found at 123-500 (DFQQEPLASA…HVRQSQSRFL (378 aa)). ATP contacts are provided by residues 129-137 (LASASIAQV) and Lys-151. The active-site Proton acceptor is Asp-286. 2 helical membrane passes run 499 to 519 (FLFGIGATLLLIGTFLMTQGA) and 520 to 540 (DEGSLPAWLMAAGTVSWIIGW).

It belongs to the ABC1 family. UbiB subfamily.

Its subcellular location is the cell inner membrane. It functions in the pathway cofactor biosynthesis; ubiquinone biosynthesis [regulation]. Is probably a protein kinase regulator of UbiI activity which is involved in aerobic coenzyme Q (ubiquinone) biosynthesis. The chain is Probable protein kinase UbiB from Sodalis glossinidius (strain morsitans).